Here is a 245-residue protein sequence, read N- to C-terminus: Dehydrogenase/reductase SDR family member 6 (245 aa).

NAD(+) contacts are provided by residues 16 to 18 (QGI), aspartate 37, and aspartate 58. Residue arginine 144 coordinates substrate. The active-site Proton acceptor is tyrosine 147. Residues lysine 151 and 180 to 184 (VDTPS) contribute to the NAD(+) site. Substrate contacts are provided by arginine 188 and arginine 205.

It belongs to the short-chain dehydrogenases/reductases (SDR) family. As to quaternary structure, homotetramer.

Its subcellular location is the cytoplasm. The catalysed reaction is cis-4-hydroxy-L-proline + NAD(+) = 4-oxo-L-proline + NADH + H(+). It carries out the reaction (R)-3-hydroxybutanoate + NAD(+) = acetoacetate + NADH + H(+). Its pathway is amino-acid metabolism. It functions in the pathway siderophore biosynthesis. Its function is as follows. NAD(H)-dependent dehydrogenase/reductase with a preference for cyclic substrates. Catalyzes stereoselective conversion of 4-oxo-L-proline to cis-4-hydroxy-L-proline, likely a detoxification mechanism for ketoprolines. Mediates the formation of 2,5-dihydroxybenzoate (2,5-DHBA), a siderophore that chelates free cytoplasmic iron, thereby regulating iron transport and homeostasis while protecting cells against free radical-induced oxidative stress. The iron-siderophore complex is imported into mitochondria, providing an iron source for mitochondrial metabolic processes in particular heme synthesis. May act as a 3-hydroxybutyrate dehydrogenase. This chain is Dehydrogenase/reductase SDR family member 6 (bdh2), found in Xenopus laevis (African clawed frog).